The chain runs to 328 residues: uncharacterized protein (328 aa).

The first 24 residues, 1 to 24, serve as a signal peptide directing secretion; it reads MKSIKGLGKLLLASSILFSSSAFA.

Belongs to the bacterial solute-binding protein 7 family.

It is found in the periplasm. This is an uncharacterized protein from Haemophilus influenzae (strain ATCC 51907 / DSM 11121 / KW20 / Rd).